Reading from the N-terminus, the 226-residue chain is MAAAAQRLLAASTKIVGVGRNFVAHAKELGNPVPKEPVLFLKPTSSFLHAGVAGAAIEVPEPVESLHHEVELAVVISQRARDVPEASAMDFVGGYALALDMTARELQSAAKSAGLPWTLGKAQDTFTPISAVIPKSDVANPDDLELWLKVDDELRQKGSTSDMIFKIPSLISYISSIMTLMEGDVILTGTPEGVGPVRPGQKIKAGITGLIDVEFDVQKRKRSFST.

Residues 1-30 (MAAAAQRLLAASTKIVGVGRNFVAHAKELG) constitute a mitochondrion transit peptide. Glu69, Glu71, and Asp100 together coordinate Mg(2+).

This sequence belongs to the FAH family. It depends on Mg(2+) as a cofactor. The cofactor is Mn(2+).

It localises to the mitochondrion. It carries out the reaction oxaloacetate = enol-oxaloacetate. Functionally, tautomerase that converts enol-oxaloacetate, a strong inhibitor of succinate dehydrogenase, to the physiological keto form of oxaloacetate. This Oryza sativa subsp. japonica (Rice) protein is Oxaloacetate tautomerase FAHD2, mitochondrial.